The primary structure comprises 491 residues: UDP-N-acetylmuramate--L-alanine ligase (491 aa).

126–132 (GTHGKTT) lines the ATP pocket.

This sequence belongs to the MurCDEF family.

Its subcellular location is the cytoplasm. It catalyses the reaction UDP-N-acetyl-alpha-D-muramate + L-alanine + ATP = UDP-N-acetyl-alpha-D-muramoyl-L-alanine + ADP + phosphate + H(+). It functions in the pathway cell wall biogenesis; peptidoglycan biosynthesis. Its function is as follows. Cell wall formation. The polypeptide is UDP-N-acetylmuramate--L-alanine ligase (Salmonella choleraesuis (strain SC-B67)).